A 94-amino-acid polypeptide reads, in one-letter code: Integration host factor subunit beta (94 aa).

The protein belongs to the bacterial histone-like protein family. Heterodimer of an alpha and a beta chain.

Its function is as follows. This protein is one of the two subunits of integration host factor, a specific DNA-binding protein that functions in genetic recombination as well as in transcriptional and translational control. The sequence is that of Integration host factor subunit beta from Aeromonas hydrophila subsp. hydrophila (strain ATCC 7966 / DSM 30187 / BCRC 13018 / CCUG 14551 / JCM 1027 / KCTC 2358 / NCIMB 9240 / NCTC 8049).